The primary structure comprises 317 residues: Melanocyte-stimulating hormone receptor (317 aa).

Topologically, residues 1–37 (MPVQGSQRRLLGSLNSTPTATPHLGLAANQTGARCLE) are extracellular. A glycan (N-linked (GlcNAc...) asparagine) is linked at asparagine 29. Residues 38-63 (VSIPDGLFLSLGLVSLVENVLVVTAI) form a helical membrane-spanning segment. The Cytoplasmic portion of the chain corresponds to 64–72 (AKNRNLHSP). A helical membrane pass occupies residues 73-93 (MYCFICCLALSDLLVSGSNML). Over 94–118 (ETAVTLLLEAGALAARAAVVQQLDN) the chain is Extracellular. The chain crosses the membrane as a helical span at residues 119–140 (VIDVITCSSMLSSLCFLGAIAV). At 141 to 163 (DRYISIFYALRYHSIVTLPRARR) the chain is on the cytoplasmic side. A helical membrane pass occupies residues 164–183 (AVAAIWVASVLFSMLFIAYY). At 184–191 (DHAAVLLC) the chain is on the extracellular side. Residues 192 to 211 (LVVFFLAMLVLMAVLYVHML) traverse the membrane as a helical segment. The Cytoplasmic portion of the chain corresponds to 212 to 240 (ARACQHAQGIARLHKRQRPAHQGFGLKGA). The helical transmembrane segment at 241–266 (ATLTILLGIFFLCWGPFFLHLTLIVL) threads the bilayer. The Extracellular segment spans residues 267–279 (CPQHPTCSCIFKN). Residues 280–300 (FNLFLALIICNAIIDPLIYAF) traverse the membrane as a helical segment. Topologically, residues 301-317 (RSQELRRTLKEVLLCSW) are cytoplasmic. The S-palmitoyl cysteine moiety is linked to residue cysteine 315.

The protein belongs to the G-protein coupled receptor 1 family. In terms of assembly, interacts with MGRN1, but does not undergo MGRN1-mediated ubiquitination; this interaction competes with GNAS-binding and thus inhibits agonist-induced cAMP production. Interacts with OPN3; the interaction results in a decrease in MC1R-mediated cAMP signaling and ultimately a decrease in melanin production in melanocytes.

The protein resides in the cell membrane. In terms of biological role, receptor for MSH (alpha, beta and gamma) and ACTH. The activity of this receptor is mediated by G proteins which activate adenylate cyclase. Mediates melanogenesis, the production of eumelanin (black/brown) and phaeomelanin (red/yellow), via regulation of cAMP signaling in melanocytes. This Miopithecus talapoin (Angolan talapoin) protein is Melanocyte-stimulating hormone receptor (MC1R).